The primary structure comprises 878 residues: Bifunctional heparan sulfate N-deacetylase/N-sulfotransferase 1 (878 aa).

At 1–17 (MSLSLKTRRFGRPVRPQ) the chain is on the cytoplasmic side. The sufficient for localization to Golgi membrane stretch occupies residues 1 to 169 (MSLSLKTRRF…VEYGVGIIGF (169 aa)). A helical; Signal-anchor for type II membrane protein transmembrane segment spans residues 18-38 (LVLLLLFALCLLSVFISAYYL). Residues 39–878 (YGWKRGLEPS…WLREELQSTR (840 aa)) lie on the Lumenal side of the membrane. The interval 40-594 (GWKRGLEPSG…KRHKDIWSKE (555 aa)) is heparan sulfate N-deacetylase 1. The tract at residues 47 to 71 (PSGSEAQSPDCDEPKISPSRLLPMK) is disordered. Residues Asn-231, Asn-347, and Asn-397 are each glycosylated (N-linked (GlcNAc...) asparagine). Residues 595–878 (KTCDRFPKLL…WLREELQSTR (284 aa)) form a heparan sulfate N-sulfotransferase 1 region. Catalysis depends on Lys-610, which acts as the For sulfotransferase activity. Adenosine 3',5'-bisphosphate is bound at residue 610–614 (KTGTT). An N-linked (GlcNAc...) asparagine glycan is attached at Asn-663. Ser-708 and Trp-813 together coordinate adenosine 3',5'-bisphosphate. Cys-814 and Cys-824 form a disulfide bridge. 829–833 (KGRKY) is an adenosine 3',5'-bisphosphate binding site.

This sequence belongs to the sulfotransferase 1 family. NDST subfamily. In terms of assembly, monomer.

Its subcellular location is the golgi apparatus membrane. The protein localises to the golgi apparatus. It is found in the trans-Golgi network membrane. The enzyme catalyses alpha-D-glucosaminyl-[heparan sulfate](n) + 3'-phosphoadenylyl sulfate = N-sulfo-alpha-D-glucosaminyl-[heparan sulfate](n) + adenosine 3',5'-bisphosphate + 2 H(+). Its pathway is glycan metabolism; heparan sulfate biosynthesis. It functions in the pathway glycan metabolism; heparin biosynthesis. In terms of biological role, essential bifunctional enzyme that catalyzes both the N-deacetylation and the N-sulfation of glucosamine (GlcNAc) of the glycosaminoglycan in heparan sulfate. Modifies the GlcNAc-GlcA disaccharide repeating sugar backbone to make N-sulfated heparosan, a prerequisite substrate for later modifications in heparin biosynthesis. Plays a role in determining the extent and pattern of sulfation of heparan sulfate. The sequence is that of Bifunctional heparan sulfate N-deacetylase/N-sulfotransferase 1 (ndst1) from Xenopus tropicalis (Western clawed frog).